Here is a 709-residue protein sequence, read N- to C-terminus: Early transcription factor 82 kDa subunit (709 aa).

This sequence belongs to the poxviridae VETF large subunit family. As to quaternary structure, heterodimer of a 70 kDa and a 82 kDa subunit. Part of the early transcription complex composed of ETF, RAP94, and the DNA-directed RNA polymerase.

It is found in the virion. In terms of biological role, acts with RNA polymerase to initiate transcription from early gene promoters. Is recruited by the RPO-associated protein of 94 kDa (RAP94) to form the early transcription complex, which also contains the core RNA polymerase. ETF heterodimer binds to early gene promoters. The sequence is that of Early transcription factor 82 kDa subunit (VETFL) from Vertebrata (FPV).